Consider the following 893-residue polypeptide: Probable ion channel CASTOR (893 aa).

The disordered stretch occupies residues 1 to 94 (MPLDPDSSPA…APRRRDPRYA (94 aa)). The segment covering 65-85 (PLPPPEQQKQQQPPPTTPPPA) has biased composition (pro residues). The helical transmembrane segment at 132-152 (TLRWSGMVSVAAIVLCFSSLV) threads the bilayer. Residues 156–178 (SSLHDQVHHLKAQLAEATTKLQS) adopt a coiled-coil conformation. Helical transmembrane passes span 210–230 (LLLS…MDLF), 266–286 (LVLL…LYGV), and 318–338 (LVSV…LGLV). RCK N-terminal domains follow at residues 359 to 500 (QSHT…ETVV) and 619 to 792 (PERI…DYVL). The stretch at 389-415 (TIVVMAEKDKEEMEADIAKMEFDLKGT) forms a coiled coil.

This sequence belongs to the castor/pollux (TC 1.A.1.23) family. In terms of tissue distribution, expressed in roots, leaves, stems and panicles.

It is found in the nucleus membrane. In terms of biological role, required for mycorrhizal symbiosis. This is Probable ion channel CASTOR from Oryza sativa subsp. japonica (Rice).